Here is a 754-residue protein sequence, read N- to C-terminus: 5-methyltetrahydropteroyltriglutamate--homocysteine methyltransferase (754 aa).

Residues 16-19 (RELK) and Lys-114 contribute to the 5-methyltetrahydropteroyltri-L-glutamate site. L-homocysteine contacts are provided by residues 430 to 432 (IGS) and Glu-483. Residues 430 to 432 (IGS) and Glu-483 each bind L-methionine. 5-methyltetrahydropteroyltri-L-glutamate is bound by residues 514–515 (RC) and Trp-560. Asp-598 contributes to the L-homocysteine binding site. Asp-598 serves as a coordination point for L-methionine. Glu-604 contributes to the 5-methyltetrahydropteroyltri-L-glutamate binding site. Positions 640, 642, and 664 each coordinate Zn(2+). His-693 (proton donor) is an active-site residue. Position 725 (Cys-725) interacts with Zn(2+).

It belongs to the vitamin-B12 independent methionine synthase family. The cofactor is Zn(2+).

The enzyme catalyses 5-methyltetrahydropteroyltri-L-glutamate + L-homocysteine = tetrahydropteroyltri-L-glutamate + L-methionine. It participates in amino-acid biosynthesis; L-methionine biosynthesis via de novo pathway; L-methionine from L-homocysteine (MetE route): step 1/1. Functionally, catalyzes the transfer of a methyl group from 5-methyltetrahydrofolate to homocysteine resulting in methionine formation. This chain is 5-methyltetrahydropteroyltriglutamate--homocysteine methyltransferase, found in Aeromonas salmonicida (strain A449).